The following is a 170-amino-acid chain: Adenine phosphoribosyltransferase (170 aa).

Belongs to the purine/pyrimidine phosphoribosyltransferase family. In terms of assembly, homodimer.

The protein localises to the cytoplasm. It catalyses the reaction AMP + diphosphate = 5-phospho-alpha-D-ribose 1-diphosphate + adenine. The protein operates within purine metabolism; AMP biosynthesis via salvage pathway; AMP from adenine: step 1/1. Functionally, catalyzes a salvage reaction resulting in the formation of AMP, that is energically less costly than de novo synthesis. The sequence is that of Adenine phosphoribosyltransferase from Geobacillus thermodenitrificans (strain NG80-2).